Consider the following 339-residue polypeptide: DNA-directed RNA polymerase subunit alpha (339 aa).

The tract at residues 1–235 is alpha N-terminal domain (alpha-NTD); sequence MVIQKNWQEL…DQLQIFVNFE (235 aa). Positions 251-339 are alpha C-terminal domain (alpha-CTD); that stretch reads FNPALLKKVD…DLAKRFEEHY (89 aa).

It belongs to the RNA polymerase alpha chain family. In terms of assembly, homodimer. The RNAP catalytic core consists of 2 alpha, 1 beta, 1 beta' and 1 omega subunit. When a sigma factor is associated with the core the holoenzyme is formed, which can initiate transcription.

It catalyses the reaction RNA(n) + a ribonucleoside 5'-triphosphate = RNA(n+1) + diphosphate. DNA-dependent RNA polymerase catalyzes the transcription of DNA into RNA using the four ribonucleoside triphosphates as substrates. This is DNA-directed RNA polymerase subunit alpha from Methylobacterium nodulans (strain LMG 21967 / CNCM I-2342 / ORS 2060).